Reading from the N-terminus, the 584-residue chain is MKAVYLDYLLRIRYTYVFNLKVSYQSERRTYGATEHFVGCLVPKAWNCLADDYTDIKTLLDLLFGVTAVIIFACTFKCFTMTEDGLTKLNLEAFLGVSGNTQELLESLGISAIPDLSNLGASNNNNSGLTFDPNDPSAAAFYIAQQVAAIEHPPPRKMTSSEKTRSENRERKKRWREQNEERNKDNDLRCRVNKKAKKLFGSEPSIEKTNWIEAEFTRRHTKRKEKERACLSQNQSSNASRANSQSLLPDLDLLATNSSANAVLQGSAINNALNALAKDPNLIHSLLTQIDFDPSKSKDGLNLGSLTDVVPPQPPQPEHELAALQEHNEAHDAAMRQYELERQQNAMLPGLASIDGLQALPHLDFSDSAVTNQSHSQSQNSLHPLISQSETHSIFSALSETPTPVSGNGNVADAPPDFSLSQVMPLDLIAPSMQPSAVSSPMSESHVQISSEMPRTGMSALPMRPRSQNVDKHRKFPYYNKRNAVTTPSSPYDGAQSGSPQFPPFELPPHNYSQAQSPNLATPSPSFSSLPDVSLPPIVKPNLMSEPTPTNSDEKSHALGFPPPPGQKIEFQRSSSKNGTAKSD.

Disordered stretches follow at residues 151–188, 222–243, 399–418, and 433–584; these read EHPP…DNDL, KRKE…SRAN, SETP…PPDF, and MQPS…AKSD. Over residues 159 to 188 the composition is skewed to basic and acidic residues; sequence TSSEKTRSENRERKKRWREQNEERNKDNDL. Over residues 231 to 243 the composition is skewed to low complexity; it reads LSQNQSSNASRAN. Composition is skewed to polar residues over residues 399–409, 433–453, 483–500, 511–531, and 572–584; these read SETPTPVSGNG, MQPS…SSEM, NAVT…SGSP, NYSQ…SSLP, and QRSS…AKSD.

This is an uncharacterized protein from Schizosaccharomyces pombe (strain 972 / ATCC 24843) (Fission yeast).